The chain runs to 262 residues: Hydroxyethylthiazole kinase (262 aa).

Methionine 43 provides a ligand contact to substrate. 2 residues coordinate ATP: arginine 118 and threonine 164. Alanine 191 is a binding site for substrate.

This sequence belongs to the Thz kinase family. Requires Mg(2+) as cofactor.

It carries out the reaction 5-(2-hydroxyethyl)-4-methylthiazole + ATP = 4-methyl-5-(2-phosphooxyethyl)-thiazole + ADP + H(+). The protein operates within cofactor biosynthesis; thiamine diphosphate biosynthesis; 4-methyl-5-(2-phosphoethyl)-thiazole from 5-(2-hydroxyethyl)-4-methylthiazole: step 1/1. Its function is as follows. Catalyzes the phosphorylation of the hydroxyl group of 4-methyl-5-beta-hydroxyethylthiazole (THZ). The sequence is that of Hydroxyethylthiazole kinase from Cereibacter sphaeroides (strain KD131 / KCTC 12085) (Rhodobacter sphaeroides).